The sequence spans 523 residues: Probable malate:quinone oxidoreductase (523 aa).

Belongs to the MQO family. Requires FAD as cofactor.

The catalysed reaction is (S)-malate + a quinone = a quinol + oxaloacetate. It participates in carbohydrate metabolism; tricarboxylic acid cycle; oxaloacetate from (S)-malate (quinone route): step 1/1. The sequence is that of Probable malate:quinone oxidoreductase from Agrobacterium fabrum (strain C58 / ATCC 33970) (Agrobacterium tumefaciens (strain C58)).